The sequence spans 541 residues: Protein yellow (541 aa).

The first 21 residues, 1–21, serve as a signal peptide directing secretion; it reads MFQDKGWVLVTLIALVTPSWA. N144 is a glycosylation site (N-linked (GlcNAc...) asparagine).

Belongs to the major royal jelly protein family.

Its subcellular location is the secreted. In terms of biological role, controls the pigmentation pattern of the adult cuticle and larval mouth parts. The chain is Protein yellow (y) from Drosophila erecta (Fruit fly).